We begin with the raw amino-acid sequence, 447 residues long: N-succinylarginine dihydrolase (447 aa).

Substrate contacts are provided by residues 19–28 (AGLSFGNEAS), Asn110, and 137–138 (HR). The active site involves Glu174. Arg212 lines the substrate pocket. His248 is a catalytic residue. The substrate site is built by Asp250 and Asn359. Residue Cys365 is the Nucleophile of the active site.

Belongs to the succinylarginine dihydrolase family. In terms of assembly, homodimer.

The enzyme catalyses N(2)-succinyl-L-arginine + 2 H2O + 2 H(+) = N(2)-succinyl-L-ornithine + 2 NH4(+) + CO2. The protein operates within amino-acid degradation; L-arginine degradation via AST pathway; L-glutamate and succinate from L-arginine: step 2/5. Its function is as follows. Catalyzes the hydrolysis of N(2)-succinylarginine into N(2)-succinylornithine, ammonia and CO(2). The sequence is that of N-succinylarginine dihydrolase from Shigella boydii serotype 4 (strain Sb227).